Consider the following 382-residue polypeptide: Mannitol-1-phosphate 5-dehydrogenase (382 aa).

3-14 contacts NAD(+); that stretch reads ALHFGAGNIGRG.

It belongs to the mannitol dehydrogenase family.

It catalyses the reaction D-mannitol 1-phosphate + NAD(+) = beta-D-fructose 6-phosphate + NADH + H(+). The polypeptide is Mannitol-1-phosphate 5-dehydrogenase (Tolumonas auensis (strain DSM 9187 / NBRC 110442 / TA 4)).